A 396-amino-acid chain; its full sequence is Glutamyl-tRNA reductase (396 aa).

Residues 45–48 (TCNR), Ser101, 106–108 (EDQ), and Gln112 each bind substrate. Residue Cys46 is the Nucleophile of the active site. 177 to 182 (GFGDVG) contacts NADP(+).

It belongs to the glutamyl-tRNA reductase family. In terms of assembly, homodimer.

The catalysed reaction is (S)-4-amino-5-oxopentanoate + tRNA(Glu) + NADP(+) = L-glutamyl-tRNA(Glu) + NADPH + H(+). The protein operates within porphyrin-containing compound metabolism; protoporphyrin-IX biosynthesis; 5-aminolevulinate from L-glutamyl-tRNA(Glu): step 1/2. Its function is as follows. Catalyzes the NADPH-dependent reduction of glutamyl-tRNA(Glu) to glutamate 1-semialdehyde (GSA). The polypeptide is Glutamyl-tRNA reductase (Clostridium acetobutylicum (strain ATCC 824 / DSM 792 / JCM 1419 / IAM 19013 / LMG 5710 / NBRC 13948 / NRRL B-527 / VKM B-1787 / 2291 / W)).